The chain runs to 88 residues: Conotoxin Ca8.3 (88 aa).

Positions 1–21 (MMLKMGAMFVLLLLFILPSSQ) are cleaved as a signal peptide. A propeptide spanning residues 22–46 (QEGDVQARKTHLKSGFYGTLAMSTR) is cleaved from the precursor.

This sequence belongs to the conotoxin S superfamily. Contains 5 disulfide bonds. As to expression, expressed by the venom duct.

It localises to the secreted. The sequence is that of Conotoxin Ca8.3 from Conus caracteristicus (Characteristic cone).